The following is a 209-amino-acid chain: Uracil phosphoribosyltransferase (209 aa).

5-phospho-alpha-D-ribose 1-diphosphate contacts are provided by residues R79, R104, and 131–139 (DPMLATGGS). Uracil-binding positions include I194 and 199 to 201 (GDA). D200 provides a ligand contact to 5-phospho-alpha-D-ribose 1-diphosphate.

It belongs to the UPRTase family. Mg(2+) serves as cofactor.

The catalysed reaction is UMP + diphosphate = 5-phospho-alpha-D-ribose 1-diphosphate + uracil. The protein operates within pyrimidine metabolism; UMP biosynthesis via salvage pathway; UMP from uracil: step 1/1. With respect to regulation, allosterically activated by GTP. Catalyzes the conversion of uracil and 5-phospho-alpha-D-ribose 1-diphosphate (PRPP) to UMP and diphosphate. The protein is Uracil phosphoribosyltransferase of Lacticaseibacillus paracasei (strain ATCC 334 / BCRC 17002 / CCUG 31169 / CIP 107868 / KCTC 3260 / NRRL B-441) (Lactobacillus paracasei).